Here is a 406-residue protein sequence, read N- to C-terminus: Probable endo-xylogalacturonan hydrolase A (406 aa).

Residues 1–18 (MLYPRNLALFSLLSLSSA) form the signal peptide. 4 PbH1 repeats span residues 183–213 (TQHVTFKNLRMDATSNSQNPPKNTDGFDIGA), 214–235 (STHVTISSVSVTNDDDCVAFKP), 237–257 (SNYVTVEDVTCTGSHGISVGS), and 299–320 (VKNVTFSDFNVRGCDYAFQIES). Residue aspartate 228 is the Proton donor of the active site. The active site involves histidine 251. N-linked (GlcNAc...) asparagine glycosylation occurs at asparagine 301.

Belongs to the glycosyl hydrolase 28 family.

The protein localises to the secreted. Functionally, pectinolytic enzyme involved in the degradation of xylogalacturonan (xga), a galacturonan backbone heavily substituted with xylose, and which is one important component of the hairy regions of pectin. Activity requires a galacturonic acid backbone substituted with xylose. The sequence is that of Probable endo-xylogalacturonan hydrolase A (xghA) from Aspergillus fumigatus (strain ATCC MYA-4609 / CBS 101355 / FGSC A1100 / Af293) (Neosartorya fumigata).